The following is a 175-amino-acid chain: Alpha-crystallin B chain (175 aa).

Met-1 is subject to N-acetylmethionine. Phosphoserine occurs at positions 19, 45, and 59. Positions 56 to 164 (RAPSWIDTGL…PERTIPITRE (109 aa)) constitute a sHSP domain. A Zn(2+)-binding site is contributed by His-83. Residue Lys-92 is modified to N6-acetyllysine. Residues His-104, Glu-106, His-111, and His-119 each contribute to the Zn(2+) site. Positions 142-175 (VLTVNGPRKQASGPERTIPITREEKPAVTAAPKK) are disordered. The residue at position 166 (Lys-166) is an N6-acetyllysine. The O-linked (GlcNAc) threonine glycan is linked to Thr-170.

It belongs to the small heat shock protein (HSP20) family. In terms of assembly, heteromer composed of three CRYAA and one CRYAB subunits. Aggregates with homologous proteins, including the small heat shock protein HSPB1, to form large heteromeric complexes. Inter-subunit bridging via zinc ions enhances stability, which is crucial as there is no protein turn over in the lens. Interacts with HSPBAP1. Interacts with TTN/titin. Interacts with TMEM109; in the cellular response to DNA damage. Interacts with DES; binds rapidly during early stages of DES filament assembly and a reduced binding seen in the later stages. Interacts with TMED10; the interaction mediates the translocation from the cytoplasm into the ERGIC (endoplasmic reticulum-Golgi intermediate compartment) and thereby secretion. Interacts with ATP6V1A and with MTOR, forming a ternary complex. As to expression, lens as well as other tissues.

It is found in the cytoplasm. It localises to the nucleus. Its subcellular location is the secreted. The protein resides in the lysosome. In terms of biological role, may contribute to the transparency and refractive index of the lens. Has chaperone-like activity, preventing aggregation of various proteins under a wide range of stress conditions. In lens epithelial cells, stabilizes the ATP6V1A protein, preventing its degradation by the proteasome. In Rattus norvegicus (Rat), this protein is Alpha-crystallin B chain.